The chain runs to 441 residues: Tubulin beta chain (441 aa).

Gln-11, Glu-69, Ser-138, Gly-142, Thr-143, Gly-144, Asn-204, and Asn-226 together coordinate GTP. Glu-69 contributes to the Mg(2+) binding site.

This sequence belongs to the tubulin family. Dimer of alpha and beta chains. A typical microtubule is a hollow water-filled tube with an outer diameter of 25 nm and an inner diameter of 15 nM. Alpha-beta heterodimers associate head-to-tail to form protofilaments running lengthwise along the microtubule wall with the beta-tubulin subunit facing the microtubule plus end conferring a structural polarity. Microtubules usually have 13 protofilaments but different protofilament numbers can be found in some organisms and specialized cells. Mg(2+) is required as a cofactor.

The protein localises to the cytoplasm. Its subcellular location is the cytoskeleton. In terms of biological role, tubulin is the major constituent of microtubules, a cylinder consisting of laterally associated linear protofilaments composed of alpha- and beta-tubulin heterodimers. Microtubules grow by the addition of GTP-tubulin dimers to the microtubule end, where a stabilizing cap forms. Below the cap, tubulin dimers are in GDP-bound state, owing to GTPase activity of alpha-tubulin. This Babesia bovis protein is Tubulin beta chain.